The following is a 378-amino-acid chain: Lactosylceramide 1,3-N-acetyl-beta-D-glucosaminyltransferase (378 aa).

At 1–14 (MRMLVSGRRVKKWQ) the chain is on the cytoplasmic side. Residues 15–35 (LIIQLFATCFLASLMFFWEPI) traverse the membrane as a helical; Signal-anchor for type II membrane protein segment. Over 36 to 378 (DNHIVSHMKS…DTYPCRAAFI (343 aa)) the chain is Lumenal. Residue Asn-59 is glycosylated (N-linked (GlcNAc...) asparagine).

Belongs to the glycosyltransferase 31 family. As to expression, widely expressed. Highly expressed in lung, colon, placenta, testis, pituitary gland and cerebellum. Weakly expressed in brain, liver, spleen, lymph node and thymus.

Its subcellular location is the golgi apparatus membrane. The catalysed reaction is a beta-D-Gal-(1-&gt;4)-beta-D-Glc-(1&lt;-&gt;1)-Cer(d18:1(4E)) + UDP-N-acetyl-alpha-D-glucosamine = a beta-D-GlcNAc-(1-&gt;3)-beta-D-Gal-(1-&gt;4)-beta-D-Glc-(1&lt;-&gt;1)-Cer(d18:1(4E)) + UDP + H(+). The enzyme catalyses a neolactoside nLc4Cer(d18:1(4E)) + UDP-N-acetyl-alpha-D-glucosamine = a neolactoside IV(3)-beta-GlcNAc-nLc4Cer(d18:1(4E)) + UDP + H(+). It functions in the pathway protein modification; protein glycosylation. Functionally, beta-1,3-N-acetylglucosaminyltransferase that plays a key role in the synthesis of lacto- or neolacto-series carbohydrate chains on glycolipids, notably by participating in biosynthesis of HNK-1 and Lewis X carbohydrate structures. Has strong activity toward lactosylceramide (LacCer) and neolactotetraosylceramide (nLc(4)Cer; paragloboside), resulting in the synthesis of Lc(3)Cer and neolactopentaosylceramide (nLc(5)Cer), respectively. Probably plays a central role in regulating neolacto-series glycolipid synthesis during embryonic development. The protein is Lactosylceramide 1,3-N-acetyl-beta-D-glucosaminyltransferase of Homo sapiens (Human).